The following is a 598-amino-acid chain: Elongation factor 4 (598 aa).

A tr-type G domain is found at 2 to 184 (DNVRNFAIIA…AIITKLPAPQ (183 aa)). GTP contacts are provided by residues 14–19 (DHGKST) and 131–134 (NKVD).

Belongs to the TRAFAC class translation factor GTPase superfamily. Classic translation factor GTPase family. LepA subfamily.

The protein localises to the cell membrane. The enzyme catalyses GTP + H2O = GDP + phosphate + H(+). In terms of biological role, required for accurate and efficient protein synthesis under certain stress conditions. May act as a fidelity factor of the translation reaction, by catalyzing a one-codon backward translocation of tRNAs on improperly translocated ribosomes. Back-translocation proceeds from a post-translocation (POST) complex to a pre-translocation (PRE) complex, thus giving elongation factor G a second chance to translocate the tRNAs correctly. Binds to ribosomes in a GTP-dependent manner. This chain is Elongation factor 4, found in Wolbachia sp. subsp. Brugia malayi (strain TRS).